A 65-amino-acid polypeptide reads, in one-letter code: Large ribosomal subunit protein bL35 (65 aa).

The segment at 1-25 (MPKMKSHRGAAKRFKKTGTGKLKRA) is disordered.

The protein belongs to the bacterial ribosomal protein bL35 family.

This is Large ribosomal subunit protein bL35 from Clostridium botulinum (strain Eklund 17B / Type B).